Here is a 632-residue protein sequence, read N- to C-terminus: 2-oxoacid:ferredoxin oxidoreductase subunit alpha (632 aa).

The short motif at 253-257 (YPITP) is the YPITP motif element. Substrate-binding residues include threonine 256 and arginine 344.

As to quaternary structure, heterodimer composed of an alpha and a beta subunit.

Its subcellular location is the cytoplasm. It catalyses the reaction a 2-oxocarboxylate + 2 oxidized [2Fe-2S]-[ferredoxin] + CoA = an acyl-CoA + 2 reduced [2Fe-2S]-[ferredoxin] + CO2 + H(+). Functionally, catalyzes the coenzyme A-dependent oxidative decarboxylation of different 2-oxoacids such as 2-oxoglutarate, pyruvate and 2-oxobutyrate to form their CoA derivatives. The chain is 2-oxoacid:ferredoxin oxidoreductase subunit alpha from Sulfolobus sp.